The primary structure comprises 670 residues: Nitrate import ATP-binding protein NrtC (670 aa).

The ABC transporter domain maps to 5–239 (IEIDHVDRIF…RPRHRLEVVN (235 aa)). 42–49 (GHSGCGKS) contacts ATP. The interval 255–278 (NQQKRAKKVGAVSQFAEAMGGNGL) is linker. Residues 279–670 (EKINLDLGFI…LIDQIDQVNQ (392 aa)) form a nrtA-like region.

The protein belongs to the ABC transporter superfamily. Nitrate/nitrite/cyanate uptake transporter (NitT) (TC 3.A.1.16) family. The complex is composed of two ATP-binding proteins (NrtC and NrtD), two transmembrane proteins (NrtB) and a solute-binding protein (NrtA).

Its subcellular location is the cell inner membrane. It carries out the reaction nitrate(out) + ATP + H2O = nitrate(in) + ADP + phosphate + H(+). Its function is as follows. Part of the ABC transporter complex NrtABCD involved in nitrate uptake. The complex is probably also involved in nitrite transport. Probably responsible for energy coupling to the transport system. The chain is Nitrate import ATP-binding protein NrtC (nrtC) from Synechocystis sp. (strain ATCC 27184 / PCC 6803 / Kazusa).